The following is a 147-amino-acid chain: Cysteine proteinase inhibitor 2 (147 aa).

The first 27 residues, 1 to 27, serve as a signal peptide directing secretion; that stretch reads MATMLKVSLVLSLLGFLVIAVVTPSAA. The Cystatin domain maps to 87–117; the sequence is LQFSRVVSAQKQVVAGLKYYLRIEVTQPNGS. The Secondary area of contact signature appears at 98–102; the sequence is QVVAG. Residue N115 is glycosylated (N-linked (GlcNAc...) asparagine).

The protein belongs to the cystatin family. Phytocystatin subfamily.

Its subcellular location is the secreted. Its function is as follows. Specific inhibitor of cysteine proteinases. Probably involved in the regulation of endogenous processes and in defense against pests and pathogens. This is Cysteine proteinase inhibitor 2 (CYS2) from Arabidopsis thaliana (Mouse-ear cress).